Here is a 221-residue protein sequence, read N- to C-terminus: Woronin body major protein (221 aa).

The Microbody targeting signal signature appears at 219–221 (SRL).

It belongs to the eIF-5A family. Hex1 subfamily. Forms oligomers. Self-assembles into hexagonal rods.

The protein resides in the cell septum. Its function is as follows. Major component of Woronin bodies, fungal-specific organelles that occlude septal pores in order to separate intact from damaged compartments. Hex1 binds directly or indirectly to the Woronin body tether that in turn is anchored at the rim of the septal pore. The polypeptide is Woronin body major protein (Emericella nidulans (strain FGSC A4 / ATCC 38163 / CBS 112.46 / NRRL 194 / M139) (Aspergillus nidulans)).